Consider the following 229-residue polypeptide: Glycine betaine/carnitine/choline transport system permease protein OpuCD (229 aa).

The 181-residue stretch at 22–202 (FYRHFLMSVY…LMAVIADLVM (181 aa)) folds into the ABC transmembrane type-1 domain. Helical transmembrane passes span 27-47 (LMSV…GILI), 55-74 (GWVF…AMLA), 78-100 (LVMG…LPII), 148-168 (ALVI…GGLG), and 182-202 (AIIL…DLVM).

Belongs to the binding-protein-dependent transport system permease family. CysTW subfamily. In terms of assembly, the complex is composed of two ATP-binding proteins (OpuCA), two transmembrane proteins (OpuCB and OpuCD) and a solute-binding protein (OpuCC).

It localises to the cell membrane. Its function is as follows. Involved in a high affinity multicomponent binding-protein-dependent transport system for glycine betaine, carnitine and choline; probably responsible for the translocation of the substrate across the membrane. This is Glycine betaine/carnitine/choline transport system permease protein OpuCD (opuCD) from Bacillus subtilis (strain 168).